A 120-amino-acid chain; its full sequence is ATP-dependent Clp protease adapter protein ClpS (120 aa).

This sequence belongs to the ClpS family. Binds to the N-terminal domain of the chaperone ClpA.

In terms of biological role, involved in the modulation of the specificity of the ClpAP-mediated ATP-dependent protein degradation. This is ATP-dependent Clp protease adapter protein ClpS from Pseudomonas syringae pv. syringae (strain B728a).